The primary structure comprises 227 residues: Broad specificity amino-acid racemase RacX (227 aa).

Substrate is bound at residue 51-53 (DRP). The active-site Proton donor/acceptor is C82. Substrate contacts are provided by residues 83 to 85 (NTA) and K161. Residue C191 is the Proton donor/acceptor of the active site.

It belongs to the aspartate/glutamate racemases family. In terms of assembly, homodimer.

The enzyme catalyses an L-alpha-amino acid = a D-alpha-amino acid. It catalyses the reaction (2S,6S)-2,6-diaminopimelate = meso-2,6-diaminopimelate. It carries out the reaction L-lysine = D-lysine. The catalysed reaction is L-arginine = D-arginine. The enzyme catalyses L-ornithine = D-ornithine. It catalyses the reaction L-histidine = D-histidine. It carries out the reaction L-alanine = D-alanine. The catalysed reaction is L-tyrosine = D-tyrosine. The enzyme catalyses L-phenylalanine = D-phenylalanine. It catalyses the reaction L-serine = D-serine. It carries out the reaction L-glutamine = D-glutamine. The catalysed reaction is L-methionine = D-methionine. The enzyme catalyses L-asparagine = D-asparagine. It catalyses the reaction L-homoserine = D-homoserine. Its function is as follows. Amino-acid racemase able to utilize a broad range of substrates. Preferentially catalyzes the epimerization of LL-diaminopimelate, as well as the racemization of D-lysine, L-arginine, L-ornithine, L-lysine and D-arginine. Has lower activity against D-ornithine, L-histidine, L-alanine, L-tyrosine, L-phenylalanine, L-serine, L-glutamine, L-methionine, L-asparagine and L-homoserine. Has weak activity against L-norleucine, L-aminobutyric acid and L-norvaline. Has no activity toward nine L-amino acids (Thr, Glu, Asp, Val, Leu, Ile, Trp, Cit and Aad). D-amino acids might be used as components of peptidoglycan and/or be involved in peptidoglycan metabolism and remodeling. The polypeptide is Broad specificity amino-acid racemase RacX (racX) (Bacillus subtilis (strain 168)).